We begin with the raw amino-acid sequence, 305 residues long: MSKIPVIVIVGPTAVGKTSLSITLAKNFDGEIISGDSMQVYRGLDIGTAKITPEEMDGIKHYLIDVTDPAVPFTAAKFQAETRGLIESIHNRGKLPIIVGGTGLYIQSVFYDYGFGNASEDKAYRRELDQLDKTTLWQMLDQLDPKSAELIHENNKRRVIRALEVIHLTGKPFSEYQVHHTLNEAYQPLFLGLDLDRELLYERINRRVELMFEEGLVSEASKLYDEHLVDVPAIRGIGYKELFTYFDGNSSLEEAKELIQKNSRHFAKRQLTWFRNRMDIDWIQAGVSTTDTEAMEKVKTFLASK.

11-18 is a binding site for ATP; the sequence is GPTAVGKT. Residue 13–18 coordinates substrate; the sequence is TAVGKT. The interval 36–39 is interaction with substrate tRNA; sequence DSMQ.

This sequence belongs to the IPP transferase family. As to quaternary structure, monomer. The cofactor is Mg(2+).

The enzyme catalyses adenosine(37) in tRNA + dimethylallyl diphosphate = N(6)-dimethylallyladenosine(37) in tRNA + diphosphate. Functionally, catalyzes the transfer of a dimethylallyl group onto the adenine at position 37 in tRNAs that read codons beginning with uridine, leading to the formation of N6-(dimethylallyl)adenosine (i(6)A). The protein is tRNA dimethylallyltransferase of Listeria innocua serovar 6a (strain ATCC BAA-680 / CLIP 11262).